The chain runs to 242 residues: MEKAYKLLSVQENISHKKAKALIDSGLVSIGGQKLMVARKELPQNTRFSVQKVEKPSVIFEDENILALFKPPFIESYDLVSFFKGWALLHRLDKETSGVILLVKENSEFHLKAKKAFKDRAVKKEYLAIVQGIIEEEREINAPILTIKTTKAFSKISKKGQEAVTIITPLKIINKKTLLKVGIKTGRTHQIRVHLKHINHPIIGDTLYNNEPSSAKRLMLHAHKIALLGYEFEAIAPKEFEI.

The S4 RNA-binding domain maps to 2-62 (EKAYKLLSVQ…VEKPSVIFED (61 aa)). Asp-93 is a catalytic residue.

Belongs to the pseudouridine synthase RluA family.

The catalysed reaction is a uridine in RNA = a pseudouridine in RNA. This is an uncharacterized protein from Helicobacter pylori (strain J99 / ATCC 700824) (Campylobacter pylori J99).